The following is a 1358-amino-acid chain: Probable aldehyde oxidase 1 (1358 aa).

Positions 4–91 (AAAVVAVNGE…HCAVTTSEGI (88 aa)) constitute a 2Fe-2S ferredoxin-type domain. 4 residues coordinate [2Fe-2S] cluster: Cys-43, Cys-48, Cys-51, and Cys-73. The 183-residue stretch at 236–418 (AVTGDGCWFH…ISISIPDWCS (183 aa)) folds into the FAD-binding PCMH-type domain. Residues 540–567 (KPENANNVPNGSCTTNGTTNGSAESTVD) are disordered. The segment covering 549 to 561 (NGSCTTNGTTNGS) has biased composition (low complexity).

This sequence belongs to the xanthine dehydrogenase family. As to quaternary structure, aldehyde oxidases (AO) are homodimers and heterodimers of AO subunits. It depends on [2Fe-2S] cluster as a cofactor. FAD serves as cofactor. Requires Mo-molybdopterin as cofactor.

It carries out the reaction an aldehyde + O2 + H2O = a carboxylate + H2O2 + H(+). In Oryza sativa subsp. japonica (Rice), this protein is Probable aldehyde oxidase 1.